Here is a 657-residue protein sequence, read N- to C-terminus: Folic acid synthesis protein FOL1 (657 aa).

The DHNA stretch occupies residues 1-116 (MDKIIIKDLL…WPGVQIERTL (116 aa)). Residues 149-274 (YLAFGSNLGD…FVLLPLSDIA (126 aa)) are HPPK. The Pterin-binding domain maps to 333–641 (TFIMGILNVT…DIPEIRDAML (309 aa)). The DHPS stretch occupies residues 335–657 (IMGILNVTPD…KPQRRYQIQK (323 aa)). Asparagine 340 is a Mg(2+) binding site. Residues threonine 380, aspartate 416, and asparagine 435 each contribute to the (7,8-dihydropterin-6-yl)methyl diphosphate site. Positions 466 to 524 (LNNSNDSNSNSSINTNGEDNNNNNNNNNNNNNNNNNNNNNNNNNDDNDNDNRSKIKQKI) are disordered. Positions 467 to 509 (NNSNDSNSNSSINTNGEDNNNNNNNNNNNNNNNNNNNNNNNNN) are enriched in low complexity. Over residues 514 to 524 (NDNRSKIKQKI) the composition is skewed to basic and acidic residues. (7,8-dihydropterin-6-yl)methyl diphosphate-binding positions include aspartate 547, lysine 583, and 629–631 (RIH).

This sequence in the N-terminal section; belongs to the DHNA family. The protein in the central section; belongs to the HPPK family. It in the C-terminal section; belongs to the DHPS family. Requires Mg(2+) as cofactor.

It catalyses the reaction 7,8-dihydroneopterin = 6-hydroxymethyl-7,8-dihydropterin + glycolaldehyde. It carries out the reaction 6-hydroxymethyl-7,8-dihydropterin + ATP = (7,8-dihydropterin-6-yl)methyl diphosphate + AMP + H(+). The catalysed reaction is (7,8-dihydropterin-6-yl)methyl diphosphate + 4-aminobenzoate = 7,8-dihydropteroate + diphosphate. The protein operates within cofactor biosynthesis; tetrahydrofolate biosynthesis; 2-amino-4-hydroxy-6-hydroxymethyl-7,8-dihydropteridine diphosphate from 7,8-dihydroneopterin triphosphate: step 3/4. It participates in cofactor biosynthesis; tetrahydrofolate biosynthesis; 2-amino-4-hydroxy-6-hydroxymethyl-7,8-dihydropteridine diphosphate from 7,8-dihydroneopterin triphosphate: step 4/4. Its pathway is cofactor biosynthesis; tetrahydrofolate biosynthesis; 7,8-dihydrofolate from 2-amino-4-hydroxy-6-hydroxymethyl-7,8-dihydropteridine diphosphate and 4-aminobenzoate: step 1/2. Its function is as follows. Catalyzes three sequential steps of tetrahydrofolate biosynthesis. The chain is Folic acid synthesis protein FOL1 (fol1) from Dictyostelium discoideum (Social amoeba).